Here is a 343-residue protein sequence, read N- to C-terminus: Holliday junction branch migration complex subunit RuvB (343 aa).

Positions 1–185 (MEQEDFNIRE…FGINLHLEYY (185 aa)) are large ATPase domain (RuvB-L). Residues Leu24, Arg25, Gly66, Lys69, Thr70, Thr71, 132-134 (EDY), Arg175, Tyr185, and Arg222 each bind ATP. Thr70 provides a ligand contact to Mg(2+). The interval 186–256 (DDDILSNIIR…IAQFALEALN (71 aa)) is small ATPAse domain (RuvB-S). Residues 259-343 (KYGLDEIDNK…YSSQKTLFND (85 aa)) form a head domain (RuvB-H) region. DNA is bound by residues Arg314 and Arg319.

This sequence belongs to the RuvB family. In terms of assembly, homohexamer. Forms an RuvA(8)-RuvB(12)-Holliday junction (HJ) complex. HJ DNA is sandwiched between 2 RuvA tetramers; dsDNA enters through RuvA and exits via RuvB. An RuvB hexamer assembles on each DNA strand where it exits the tetramer. Each RuvB hexamer is contacted by two RuvA subunits (via domain III) on 2 adjacent RuvB subunits; this complex drives branch migration. In the full resolvosome a probable DNA-RuvA(4)-RuvB(12)-RuvC(2) complex forms which resolves the HJ.

The protein resides in the cytoplasm. It carries out the reaction ATP + H2O = ADP + phosphate + H(+). Its function is as follows. The RuvA-RuvB-RuvC complex processes Holliday junction (HJ) DNA during genetic recombination and DNA repair, while the RuvA-RuvB complex plays an important role in the rescue of blocked DNA replication forks via replication fork reversal (RFR). RuvA specifically binds to HJ cruciform DNA, conferring on it an open structure. The RuvB hexamer acts as an ATP-dependent pump, pulling dsDNA into and through the RuvAB complex. RuvB forms 2 homohexamers on either side of HJ DNA bound by 1 or 2 RuvA tetramers; 4 subunits per hexamer contact DNA at a time. Coordinated motions by a converter formed by DNA-disengaged RuvB subunits stimulates ATP hydrolysis and nucleotide exchange. Immobilization of the converter enables RuvB to convert the ATP-contained energy into a lever motion, pulling 2 nucleotides of DNA out of the RuvA tetramer per ATP hydrolyzed, thus driving DNA branch migration. The RuvB motors rotate together with the DNA substrate, which together with the progressing nucleotide cycle form the mechanistic basis for DNA recombination by continuous HJ branch migration. Branch migration allows RuvC to scan DNA until it finds its consensus sequence, where it cleaves and resolves cruciform DNA. The polypeptide is Holliday junction branch migration complex subunit RuvB (Bacteroides thetaiotaomicron (strain ATCC 29148 / DSM 2079 / JCM 5827 / CCUG 10774 / NCTC 10582 / VPI-5482 / E50)).